The following is a 194-amino-acid chain: Endoribonuclease YbeY (194 aa).

Residues H151, H155, and H161 each contribute to the Zn(2+) site.

Belongs to the endoribonuclease YbeY family. It depends on Zn(2+) as a cofactor.

The protein resides in the cytoplasm. Its function is as follows. Single strand-specific metallo-endoribonuclease involved in late-stage 70S ribosome quality control and in maturation of the 3' terminus of the 16S rRNA. This Gloeobacter violaceus (strain ATCC 29082 / PCC 7421) protein is Endoribonuclease YbeY.